Reading from the N-terminus, the 109-residue chain is ATP-dependent Clp protease adapter protein ClpS 2 (109 aa).

The disordered stretch occupies residues 1–24 (MAGDGGRSGPSTPSTSVITKTKPR).

Belongs to the ClpS family. As to quaternary structure, binds to the N-terminal domain of the chaperone ClpA.

Involved in the modulation of the specificity of the ClpAP-mediated ATP-dependent protein degradation. This is ATP-dependent Clp protease adapter protein ClpS 2 from Rhodopseudomonas palustris (strain ATCC BAA-98 / CGA009).